A 243-amino-acid polypeptide reads, in one-letter code: Venom nerve growth factor 3 (243 aa).

The first 18 residues, 1 to 18 (MSMLCYTLIIAFLIGIWA), serve as a signal peptide directing secretion. Positions 19-125 (APKSEDNVPL…ALNRNIRAKR (107 aa)) are excised as a propeptide. The span at 47–66 (GLKTSRNTDQRHPAPKKAED) shows a compositional bias: basic and acidic residues. The disordered stretch occupies residues 47-67 (GLKTSRNTDQRHPAPKKAEDQ). Disulfide bonds link C139/C204, C182/C232, and C192/C234. N148 and N151 each carry an N-linked (GlcNAc...) asparagine glycan.

This sequence belongs to the NGF-beta family. As to quaternary structure, homodimer; non-covalently linked. In terms of tissue distribution, expressed by the venom gland.

The protein resides in the secreted. In terms of biological role, nerve growth factor is important for the development and maintenance of the sympathetic and sensory nervous systems. It stimulates division and differentiation of sympathetic and embryonic sensory neurons as well as basal forebrain cholinergic neurons in the brain. Its relevance in the snake venom is not clear. However, it has been shown to inhibit metalloproteinase-dependent proteolysis of platelet glycoprotein Ib alpha, suggesting a metalloproteinase inhibition to prevent metalloprotease autodigestion and/or protection against prey proteases. Binds a lipid between the two protein chains in the homodimer. The lipid-bound form promotes histamine relase from mouse mast cells, contrary to the lipid-free form. The sequence is that of Venom nerve growth factor 3 from Tropidechis carinatus (Australian rough-scaled snake).